Here is a 782-residue protein sequence, read N- to C-terminus: Coiled-coil alpha-helical rod protein 1 (782 aa).

Composition is skewed to basic and acidic residues over residues 62–74 (ERDV…EPGR) and 208–218 (ETRRAGEAKEL). Disordered regions lie at residues 62-82 (ERDV…WGLE) and 182-218 (LTQA…AKEL). Coiled-coil stretches lie at residues 82-314 (EGSQ…ELTR), 344-437 (LMVQ…NAVS), and 498-691 (VADV…QQEG).

The protein resides in the cytoplasm. The protein localises to the nucleus. Its function is as follows. May be a regulator of keratinocyte proliferation or differentiation. This Pan paniscus (Pygmy chimpanzee) protein is Coiled-coil alpha-helical rod protein 1 (CCHCR1).